A 457-amino-acid polypeptide reads, in one-letter code: Putative ankyrin repeat protein L112 (457 aa).

ANK repeat units lie at residues glutamine 62–proline 91, serine 104–asparagine 132, serine 133–asparagine 162, tyrosine 193–serine 219, isoleucine 220–lysine 249, lysine 251–glutamate 279, asparagine 281–threonine 309, arginine 310–serine 339, asparagine 341–glutamine 368, asparagine 400–proline 429, and lysine 431–lysine 457.

The polypeptide is Putative ankyrin repeat protein L112 (Acanthamoeba polyphaga mimivirus (APMV)).